We begin with the raw amino-acid sequence, 500 residues long: MDKLQYELQGYLQIDRYRKQRFLYPLLFREYIYALAHDHGLNSSIFYEPTENLGYDNKFSSLIVKRLITRLHQQNHLITSVNYSRFVGPNRSFYSQTIPEGFAGIMEISFSMRLVSSLERIAKYQNLRSIHSIFPFLEDKLSHLSYVSDILIPYPIHLEILLQTLRTRIRDAPSLHLLRCFLHEHHNCNSPITPKKCISIENQRLFLFLYNSHVYECESILVFLRKQSSHLRSISFLAFLERTHFYGKIKHLVVAPRNDSQRTLPLWFFKEPLMHYVRYQGKSIMASRCTNLLMXKWKYYLVNFWQCHFHLWSQPSRIHINELSNHSFYFLGYLSGVRLTPWVIRSQMVENSFMIDTAIKRFDTIVPIFPLIGSLVKAKFCNVSGHPTSKSVWADLSDSDIIARFGWICRNLSHYHSGSSKKHSLCRIKYILRLSCARTLARKHKSTVRAICKRLGSKLLEEFLTEEQEIVSFIFRRTRLHSERIWYLDIIRINGLVPNS.

It belongs to the intron maturase 2 family. MatK subfamily.

It is found in the plastid. Its subcellular location is the chloroplast. Usually encoded in the trnK tRNA gene intron. Probably assists in splicing its own and other chloroplast group II introns. The chain is Maturase K from Brasenia schreberi (Water shield).